The following is an 832-amino-acid chain: Mucosa-associated lymphoid tissue lymphoma translocation protein 1 homolog (832 aa).

The disordered stretch occupies residues 1–39 (MSLWGQPLQASPPLAVRQPPTASSGPSTSPPAGATLNRL). Ser-2 bears the N-acetylserine mark. Low complexity predominate over residues 19 to 39 (PPTASSGPSTSPPAGATLNRL). In terms of domain architecture, Death spans 45–132 (RRLSESLDRA…EVLPLLNPPG (88 aa)). 2 Ig-like C2-type domains span residues 131–207 (PGLK…FEFS) and 218–314 (AEVT…KKAE). Ser-141 bears the Phosphoserine mark. 2 disulfide bridges follow: Cys-154-Cys-196 and Cys-257-Cys-299. Residues 356–570 (IGNMSYWEHP…SLSEKRALTD (215 aa)) are caspase-like. The Nuclear export signal signature appears at 377-384 (LTNLLRQL). Active-site residues include His-423 and Cys-472.

Belongs to the peptidase C14B family. Homooligomer; forms oligomers which bind to TRAF6. Forms a complex with CARD14 and MALT1; resulting in the formation of a CBM (CARD14-BCL10-MALT1) complex. Forms a complex with CARD11 and MALT1; resulting in the formation of a CBM (CARD11-BCL10-MALT1) complex. Forms a complex with CARD9 and MALT1; resulting in the formation of a CBM (CARD9-BCL10-MALT1) complex.

It localises to the cytoplasm. The protein localises to the perinuclear region. Its subcellular location is the nucleus. Functionally, protease that enhances BCL10-induced activation: acts via formation of CBM complexes that channel adaptive and innate immune signaling downstream of CARD domain-containing proteins (CARD9, CARD11 and CARD14) to activate NF-kappa-B and MAP kinase p38 pathways which stimulate expression of genes encoding pro-inflammatory cytokines and chemokines. Mediates BCL10 cleavage: MALT1-dependent BCL10 cleavage plays an important role in T-cell antigen receptor-induced integrin adhesion. Involved in the induction of T helper 17 cells (Th17) differentiation. Cleaves RC3H1 and ZC3H12A in response to T-cell receptor (TCR) stimulation which releases their cooperatively repressed targets to promote Th17 cell differentiation. Also mediates cleavage of N4BP1 in T-cells following TCR-mediated activation, leading to N4BP1 inactivation. May also have ubiquitin ligase activity: binds to TRAF6, inducing TRAF6 oligomerization and activation of its ligase activity. The chain is Mucosa-associated lymphoid tissue lymphoma translocation protein 1 homolog from Mus musculus (Mouse).